The following is a 109-amino-acid chain: Homeobox protein E30 (109 aa).

Positions 1-12 (GPRTRRVKRSHN) are enriched in basic residues. The segment at 1 to 27 (GPRTRRVKRSHNGKNGSPEEKRPRTAF) is disordered. Positions 20 to 79 (EKRPRTAFSAEQLARLKREFAENRYLTERRRQQLSRDLGLTEAQIKIWFQNKRAKIKKAS) form a DNA-binding region, homeobox.

It belongs to the engrailed homeobox family.

Its subcellular location is the nucleus. This Apis mellifera (Honeybee) protein is Homeobox protein E30.